The sequence spans 89 residues: MAKKSKIAKEKRIEATVAKYAERRQALKAAGNYTELAKLPRNASPVRIHRRDSLDGRPHAYLRKFGMSRLNFRRLAHAGQIPGVKKASW.

This sequence belongs to the universal ribosomal protein uS14 family. As to quaternary structure, part of the 30S ribosomal subunit. Contacts proteins S3 and S10.

Binds 16S rRNA, required for the assembly of 30S particles and may also be responsible for determining the conformation of the 16S rRNA at the A site. The chain is Small ribosomal subunit protein uS14A from Lactiplantibacillus plantarum (strain ATCC BAA-793 / NCIMB 8826 / WCFS1) (Lactobacillus plantarum).